Consider the following 28-residue polypeptide: Conotoxin Cl9b (28 aa).

Proline 17 and proline 28 each carry 4-hydroxyproline.

In terms of processing, contains 3 disulfide bonds. As to expression, expressed by the venom duct.

The protein localises to the secreted. The sequence is that of Conotoxin Cl9b from Californiconus californicus (California cone).